Consider the following 1347-residue polypeptide: MENLPFPLKLLSASSLNAPSSTPWVLDIFLTLVFALGFFFLLLPYLSYFRCDDPPSPSPGKRKCPVGRRRRPRGRMKNHSLRAGRECPRGLQETSDLLSQLQSLLGPHLDKGDFGQLSGPDPPGEVGERAPDGASQSSHEPMEDAAPILSPLASPDPQAKHPQDLASTPSPGPMTTSVSSLSASQPPEPSLPLEHPSPEPPALFPHPPHTPDPLACSPPPPKGFTAPPLRDSTLITPSHCDSVALPLGTVPQSLSPHEDLVASVPAISGLGGSNSHVSASSRWQETARTSCAFNSSVQQDHLSRHPPETYQMEAGSLFLLSSDGQNAVGIQVTETAKVNIWEEKENVGSFTDRMTPEKHLNSLRNLAKSLDAEQDTTNPKPFWNMGENSKQLPGPQKLSDPRLWQESFWKNYSQLFWGLPSLHSESLVANAWVTDRSYTLQSPPFLFNEMSNVCPIQRETTMSPLLFQAQPPSHLGPECQPFISSTPQFRPTPMAQAEAQAHLQSSFPVLSPAFPSLIKNTGVACPASQNKVQALSLPETQHPEWPLLRRQLEGRLALPSRVQKSQDVFSVSTPNLPQESLTSILPENFPVSPELRRQLEQHIKKWIIQHWGNLGRIQESLDLMQLRDESPGTSQAKGKPSPWQSSMSTGESSKEAQKVKFQLERDPCPHLGQILGETPQNLSRDMKSFPRKVLGVTSEESERNLRKPLRSDSGSDLLRCTERTHIENILKAHMGRNLGQTNEGLIPVRVRRSWLAVNQALPVSNTHVKTSNLAAPKSGKACVNTAQVLSFLEPCTQQGLGAHIVRFWAKHRWGLPLRVLKPIQCFKLEKVSSLSLTQLAGPSSATCESGAGSEVEVDMFLRKPPMASLRKQVLTKASDHMPESLLASSPAWKQFQRAPRGIPSWNDHGPLKPPPAGQEGRWPSKPLTYSLTGSTQQSRSLGAQSSKAGETREAVPQCRVPLETCMLANLQATSEDMHGFEAPGTSKSSLHPRVSVSQDPRKLCLMEEVVNEFEPGMATKSETQPQVCAAVVLLPDGQASVVPHASENLVSQVPQGHLQSMPAGNMRASQELHDLMAARRSKLVHEEPRNPNCQGSCKNQRPMFPPIHKSEKSRKPNLEKHEERLEGLRTPQLTPVRKTEDTHQDEGVQLLPSKKQPPSVSHFGGNIKQFFQWIFSKKKSKPAPVTAESQKTVKNRSCVYSSSAEAQGLMTAVGQMLDEKMSLCHARHASKVNQHKQKFQAPVCGFPCNHRHLFYSEHGRILSYAASSQQATLKSQGCPNRDRQIRNQQPLKSVRCNNEQWGLRHPQILHPKKAVSPVSPLQHWPKTSGASSHHHHCPRHCLLWEGI.

The chain crosses the membrane as a helical span at residues 23–43 (PWVLDIFLTLVFALGFFFLLL). Disordered regions lie at residues 55-89 (PSPS…ECPR), 106-235 (GPHL…STLI), 373-397 (EQDT…GPQK), 628-658 (DESP…EAQK), 899-955 (PRGI…REAV), and 1085-1160 (HEEP…PPSV). Basic residues predominate over residues 60 to 82 (GKRKCPVGRRRRPRGRMKNHSLR). Over residues 165–178 (LASTPSPGPMTTSV) the composition is skewed to polar residues. A compositionally biased stretch (pro residues) spans 198–222 (PEPPALFPHPPHTPDPLACSPPPPK). Composition is skewed to polar residues over residues 631–651 (PGTS…STGE) and 927–948 (LTYS…SSKA). Composition is skewed to basic and acidic residues over residues 1108–1127 (HKSE…RLEG) and 1137–1146 (RKTEDTHQDE).

Belongs to the SPATA31 family.

It localises to the membrane. May play a role in spermatogenesis. This chain is Spermatogenesis-associated protein 31A1, found in Homo sapiens (Human).